The chain runs to 215 residues: Ribosome maturation factor RimP (215 aa).

A disordered region spans residues 180–215 (KDNRARKEAKKRRGEPDDDVPEGAEADATEEHEQES). Residues 195-207 (PDDDVPEGAEADA) are compositionally biased toward acidic residues.

Belongs to the RimP family.

The protein localises to the cytoplasm. Its function is as follows. Required for maturation of 30S ribosomal subunits. This Mesorhizobium japonicum (strain LMG 29417 / CECT 9101 / MAFF 303099) (Mesorhizobium loti (strain MAFF 303099)) protein is Ribosome maturation factor RimP.